Reading from the N-terminus, the 405-residue chain is Exodeoxyribonuclease 7 large subunit (405 aa).

This sequence belongs to the XseA family. As to quaternary structure, heterooligomer composed of large and small subunits.

Its subcellular location is the cytoplasm. The enzyme catalyses Exonucleolytic cleavage in either 5'- to 3'- or 3'- to 5'-direction to yield nucleoside 5'-phosphates.. Its function is as follows. Bidirectionally degrades single-stranded DNA into large acid-insoluble oligonucleotides, which are then degraded further into small acid-soluble oligonucleotides. The sequence is that of Exodeoxyribonuclease 7 large subunit from Halothermothrix orenii (strain H 168 / OCM 544 / DSM 9562).